A 672-amino-acid polypeptide reads, in one-letter code: Ubiquitin carboxyl-terminal hydrolase 19 (672 aa).

The helical transmembrane segment at 11–31 (NSFTQLILTLFFVSIGLLYFV) threads the bilayer. 8 residues coordinate Zn(2+): Cys64, Cys67, Cys75, Cys78, Cys84, Cys88, His97, and Cys101. The segment at 64 to 101 (CSVCGKATTKKCSRCKSVRYCSAACQTSDWKSGHKLKC) adopts an MYND-type zinc-finger fold. The USP domain occupies 174–480 (CGLTNCGNSC…RAYMLLYSRV (307 aa)). Cys183 acts as the Nucleophile in catalysis. The active-site Proton acceptor is His439. Residues 484 to 672 (PSNLRSEESQ…HSDTEMIDAQ (189 aa)) form a disordered region. Residues 488-499 (RSEESQDEKKTD) show a composition bias toward basic and acidic residues. The span at 500 to 527 (TLNTESNQDGSVESSGVGTNDTSVSSLC) shows a compositional bias: polar residues. 2 stretches are compositionally biased toward basic and acidic residues: residues 533 to 543 (HSEDPEYEKES) and 553 to 594 (EEGK…KEDP). A compositionally biased stretch (polar residues) spans 606-615 (LDITTPSPSA). A compositionally biased stretch (basic and acidic residues) spans 623–666 (ENERSDTESKPLEKEHSDTESNKPLEKEHLDSESKPLEKEHSDT).

This sequence belongs to the peptidase C19 family.

It is found in the membrane. The enzyme catalyses Thiol-dependent hydrolysis of ester, thioester, amide, peptide and isopeptide bonds formed by the C-terminal Gly of ubiquitin (a 76-residue protein attached to proteins as an intracellular targeting signal).. Its function is as follows. Recognizes and hydrolyzes the peptide bond at the C-terminal Gly of ubiquitin. Involved in the processing of poly-ubiquitin precursors as well as that of ubiquitinated proteins. This is Ubiquitin carboxyl-terminal hydrolase 19 (UBP19) from Arabidopsis thaliana (Mouse-ear cress).